The primary structure comprises 193 residues: Ion-translocating oxidoreductase complex subunit A (193 aa).

A run of 6 helical transmembrane segments spans residues 5–25 (LLLF…FLGL), 47–67 (FVMT…LIPL), 72–92 (LRTL…EMVV), 102–122 (LLGI…VALL), 134–154 (ALYG…FAAI), and 171–191 (AIAL…SGLV).

The protein belongs to the NqrDE/RnfAE family. As to quaternary structure, the complex is composed of six subunits: RsxA, RsxB, RsxC, RsxD, RsxE and RsxG.

The protein localises to the cell inner membrane. Part of a membrane-bound complex that couples electron transfer with translocation of ions across the membrane. Required to maintain the reduced state of SoxR. This is Ion-translocating oxidoreductase complex subunit A from Salmonella agona (strain SL483).